Consider the following 1286-residue polypeptide: Autotransporter adhesin AIDA-I (1286 aa).

An N-terminal signal peptide occupies residues 1-49 (MNKAYSIIWSHSRQAWIVASELARGHGFVLAKNTLLVLAVVSTIGNAFA). S102, S111, and S116 each carry an O-alpha-linked (glycero-D-manno-heptose) serine glycan. Residue T154 is glycosylated (O-alpha-linked (glycero-D-manno-heptose) threonine). Residues S242, S252, S334, S391, S409, S539, S545, S558, S569, S576, S577, and S582 are each glycosylated (O-alpha-linked (glycero-D-manno-heptose) serine). An Autotransporter domain is found at 998–1286 (TQPESASVWM…SGALGIKYSF (289 aa)). Residues 1006-1012 (WMKITGG) traverse the membrane as a beta stranded segment. The Extracellular segment spans residues 1013–1029 (ISSGKLNDGQNKTTTNQ). Residues 1030 to 1040 (FINQLGGDIYK) form a beta stranded membrane-spanning segment. Over 1041–1047 (FHAEQLG) the chain is Periplasmic. A beta stranded transmembrane segment spans residues 1048 to 1058 (DFTLGIMGGYA). Over 1059 to 1079 (NAKGKTINYTSNKAARNTLDG) the chain is Extracellular. Residues 1080-1087 (YSVGVYGT) traverse the membrane as a beta stranded segment. Over 1088–1097 (WYQNGENATG) the chain is Periplasmic. The chain crosses the membrane as a beta stranded span at residues 1098 to 1108 (LFAETWMQYNW). Topologically, residues 1109 to 1126 (FNASVKGDGLEEEKYNLN) are extracellular. A beta stranded membrane pass occupies residues 1127-1138 (GLTASAGGGYNL). Topologically, residues 1139–1152 (NVHTWTSPEGITGE) are periplasmic. The beta stranded transmembrane segment at 1153 to 1164 (FWLQPHLQAVWM) threads the bilayer. Topologically, residues 1165–1186 (GVTPDTHQEDNGTVVQGAGKNN) are extracellular. Residues 1187–1198 (IQTKAGIRASWK) traverse the membrane as a beta stranded segment. Topologically, residues 1199 to 1210 (VKSTLDKDTGRR) are periplasmic. Residues 1211-1221 (FRPYIEANWIH) traverse the membrane as a beta stranded segment. Topologically, residues 1222 to 1242 (NTHEFGVKMSDDSQLLSGSRN) are extracellular. The chain crosses the membrane as a beta stranded span at residues 1243–1253 (QGEIKTGIEGV). The Periplasmic portion of the chain corresponds to 1254 to 1259 (ITQNLS). A beta stranded transmembrane segment spans residues 1260–1267 (VNGGVAYQ). Over 1268–1275 (AGGHGSNA) the chain is Extracellular. The chain crosses the membrane as a beta stranded span at residues 1276 to 1284 (ISGALGIKY). At 1285–1286 (SF) the chain is on the periplasmic side.

As to quaternary structure, intercellular AIDA-AIDA interaction is responsible for bacterial autoaggregation. AIDA can also interact with antigen 43 (Ag43), and the resultant intercellular AIDA-Ag43 interaction causes cell aggregation. Post-translationally, glycosylated on serine residues by AHH and AAH2 in the cytoplasm. Glycosylated with an average of 19 heptose residues. Glycosylated with either ADP-L, D-heptose or ADP-D, D-heptose. Glycosylation is required for protein folding/stabilization and resistance to protease-mediated degradation. Glycosylation is required for bacteria adhesion to mammalian cells. Glycosylation is dispensable for cell outer membrane localization. Glycosylation is dispensable for AIDA-mediated cell-cell aggregation and induction of biofilm formation. Glycosylation is dispensable for interaction with Ag43.

The protein localises to the periplasm. Its subcellular location is the secreted. It is found in the cell surface. It localises to the cell outer membrane. Its function is as follows. Potent bacterial adhesin that mediates bacterial attachment to a broad variety of human and other mammalian cells. Has additional virulence properties, as it is capable of mediating bacterial autoaggregation via intercellular self-recognition and it is a highly efficient initiator of biofilm formation. This Escherichia coli protein is Autotransporter adhesin AIDA-I (aidA).